Here is a 633-residue protein sequence, read N- to C-terminus: Laccase ARB_05828 (633 aa).

Residues 1–16 form the signal peptide; that stretch reads MKRLGLAALYIGSALA. Positions 22 to 47 are excised as a propeptide; it reads GPPSRNVPRDDFPMFNPLPSTDLNTR. A glycan (N-linked (GlcNAc...) asparagine) is linked at Asn143. Cu cation is bound by residues His148, His150, His192, and His194. Cys169 and Cys607 are disulfide-bonded. One can recognise a Plastocyanin-like domain in the interval 224 to 353; that stretch reads LLMTDHLHSS…GRYWVRTTPA (130 aa). 2 N-linked (GlcNAc...) asparagine glycosylation sites follow: Asn286 and Asn456. Residues His508, His511, His513, His568, Cys569, His570, and His574 each contribute to the Cu cation site.

This sequence belongs to the multicopper oxidase family. Monomer. Requires Cu cation as cofactor.

The protein localises to the secreted. The enzyme catalyses 4 hydroquinone + O2 = 4 benzosemiquinone + 2 H2O. The polypeptide is Laccase ARB_05828 (Arthroderma benhamiae (strain ATCC MYA-4681 / CBS 112371) (Trichophyton mentagrophytes)).